A 1043-amino-acid polypeptide reads, in one-letter code: Sucrose-phosphate synthase 1 (1043 aa).

Residues 95–117 (EEKEAQRLAKRRLEREKGRREAT) are compositionally biased toward basic and acidic residues. Positions 95–127 (EEKEAQRLAKRRLEREKGRREATADMSEEFSEG) are disordered. Serine 121, serine 125, serine 152, and serine 155 each carry phosphoserine. The tract at residues 670-693 (PRHPQWQSDDGGDNSEPESPSDSL) is disordered.

The protein belongs to the glycosyltransferase 1 family. As to quaternary structure, homodimer or homotetramer. Post-translationally, phosphorylated at Ser-152 upon sucrose supply. As to expression, expressed in seeds, stems, rosette leaves, flowers and siliques. Highly expressed in maturing nectaries.

The catalysed reaction is beta-D-fructose 6-phosphate + UDP-alpha-D-glucose = sucrose 6(F)-phosphate + UDP + H(+). Its pathway is glycan biosynthesis; sucrose biosynthesis; sucrose from D-fructose 6-phosphate and UDP-alpha-D-glucose: step 1/2. Activity is regulated by phosphorylation and moderated by concentration of metabolites and light. Functionally, plays a major role in photosynthetic sucrose synthesis by catalyzing the rate-limiting step of sucrose biosynthesis from UDP-glucose and fructose- 6-phosphate. Involved in the regulation of carbon partitioning in the leaves of plants. May regulate the synthesis of sucrose and therefore play a major role as a limiting factor in the export of photoassimilates out of the leaf. Plays a role for sucrose availability that is essential for plant growth and fiber elongation. Required for nectar secretion. The sequence is that of Sucrose-phosphate synthase 1 (SPS1) from Arabidopsis thaliana (Mouse-ear cress).